A 146-amino-acid polypeptide reads, in one-letter code: Hemoglobin subunit beta (146 aa).

Val-1 is subject to N-acetylvaline. Residues 2-146 (HLSGGEKSAV…VAHALGHKYH (145 aa)) form the Globin domain. At Thr-12 the chain carries Phosphothreonine. An N6-acetyllysine modification is found at Lys-59. His-63 contributes to the heme b binding site. At Lys-82 the chain carries N6-acetyllysine. Heme b is bound at residue His-92. An S-nitrosocysteine modification is found at Cys-93. Position 144 is an N6-acetyllysine (Lys-144).

Belongs to the globin family. In terms of assembly, heterotetramer of two alpha chains and two beta chains. As to expression, red blood cells.

Involved in oxygen transport from the lung to the various peripheral tissues. This is Hemoglobin subunit beta (HBB) from Ornithorhynchus anatinus (Duckbill platypus).